A 307-amino-acid polypeptide reads, in one-letter code: Olfactory receptor 5M3 (307 aa).

The Extracellular portion of the chain corresponds to 1–23; it reads MLNFTDVTEFILLGLTSRREWQV. Asn-3 carries an N-linked (GlcNAc...) asparagine glycan. Residues 24–44 form a helical membrane-spanning segment; it reads LFFIIFLVVYIITMVGNIGMM. Residues 45-52 are Cytoplasmic-facing; that stretch reads VLIKVSPQ. Residues 53–73 traverse the membrane as a helical segment; that stretch reads LNNPMYFFLSHLSFVDVWFSS. Residues 74–97 are Extracellular-facing; it reads NVTPKMLENLLSDKKTITYAGCLV. Cysteines 95 and 187 form a disulfide. The helical transmembrane segment at 98 to 118 threads the bilayer; that stretch reads QCFFFIALVHVEIFILAAMAF. The Cytoplasmic portion of the chain corresponds to 119–137; it reads DRYMAIGNPLLYGSKMSRV. The chain crosses the membrane as a helical span at residues 138–158; it reads VCIRLITFPYIYGFLTSLAAT. Topologically, residues 159–194 are extracellular; that stretch reads LWTYGLYFCGKIEINHFYCADPPLIKMACAGTFVKE. A helical transmembrane segment spans residues 195–215; the sequence is YTMIILAGINFTYSLTVIIIS. The Cytoplasmic portion of the chain corresponds to 216–235; it reads YLFILIAILRMRSAEGRQKA. A helical transmembrane segment spans residues 236-256; that stretch reads FSTCGSHLTAVIIFYGTLIFM. The Extracellular segment spans residues 257–269; it reads YLRRPTEESVEQG. The chain crosses the membrane as a helical span at residues 270–290; sequence KMVAVFYTTVIPMLNPMIYSL. The Cytoplasmic portion of the chain corresponds to 291–307; it reads RNKDVKKAMMKVISRSC.

It belongs to the G-protein coupled receptor 1 family.

Its subcellular location is the cell membrane. Odorant receptor. This Homo sapiens (Human) protein is Olfactory receptor 5M3 (OR5M3).